Here is a 255-residue protein sequence, read N- to C-terminus: tRNA (guanine-N(1)-)-methyltransferase (255 aa).

S-adenosyl-L-methionine is bound by residues Gly-113 and 133–138 (IGDYVL).

The protein belongs to the RNA methyltransferase TrmD family. In terms of assembly, homodimer.

The protein localises to the cytoplasm. It catalyses the reaction guanosine(37) in tRNA + S-adenosyl-L-methionine = N(1)-methylguanosine(37) in tRNA + S-adenosyl-L-homocysteine + H(+). Specifically methylates guanosine-37 in various tRNAs. The chain is tRNA (guanine-N(1)-)-methyltransferase from Salmonella choleraesuis (strain SC-B67).